A 384-amino-acid polypeptide reads, in one-letter code: 1-deoxy-D-xylulose 5-phosphate reductoisomerase (384 aa).

7 residues coordinate NADPH: Thr10, Gly11, Ser12, Ile13, Arg37, Asn38, and Asn124. Residue Lys125 participates in 1-deoxy-D-xylulose 5-phosphate binding. Glu126 is a binding site for NADPH. Asp150 contributes to the Mn(2+) binding site. 1-deoxy-D-xylulose 5-phosphate is bound by residues Ser151, Glu152, Ser176, and His199. Glu152 is a binding site for Mn(2+). Gly205 is an NADPH binding site. 4 residues coordinate 1-deoxy-D-xylulose 5-phosphate: Ser212, Asn217, Lys218, and Glu221. Glu221 is a Mn(2+) binding site.

Belongs to the DXR family. It depends on Mg(2+) as a cofactor. Mn(2+) serves as cofactor.

It catalyses the reaction 2-C-methyl-D-erythritol 4-phosphate + NADP(+) = 1-deoxy-D-xylulose 5-phosphate + NADPH + H(+). Its pathway is isoprenoid biosynthesis; isopentenyl diphosphate biosynthesis via DXP pathway; isopentenyl diphosphate from 1-deoxy-D-xylulose 5-phosphate: step 1/6. Its function is as follows. Catalyzes the NADPH-dependent rearrangement and reduction of 1-deoxy-D-xylulose-5-phosphate (DXP) to 2-C-methyl-D-erythritol 4-phosphate (MEP). The protein is 1-deoxy-D-xylulose 5-phosphate reductoisomerase of Clostridium perfringens (strain 13 / Type A).